We begin with the raw amino-acid sequence, 223 residues long: Probable glutathione S-transferase (223 aa).

A GST N-terminal domain is found at 2 to 81 (AEVKLLGFWY…YIDETFEGPS (80 aa)). Glutathione is bound by residues Ser-12, Lys-39, Val-53, and 65 to 66 (ES). Residues 86 to 212 (DPYDRALARF…ELLAFFRARF (127 aa)) enclose the GST C-terminal domain.

It belongs to the GST superfamily. HSP26 family. Root tip-specific expression.

It catalyses the reaction RX + glutathione = an S-substituted glutathione + a halide anion + H(+). This is Probable glutathione S-transferase from Nicotiana tabacum (Common tobacco).